We begin with the raw amino-acid sequence, 356 residues long: Methylthioribose-1-phosphate isomerase (356 aa).

Substrate is bound by residues 53 to 55 (RGA), arginine 97, and glutamine 203. Residue aspartate 244 is the Proton donor of the active site. 254–255 (NK) is a substrate binding site.

It belongs to the eIF-2B alpha/beta/delta subunits family. MtnA subfamily.

It carries out the reaction 5-(methylsulfanyl)-alpha-D-ribose 1-phosphate = 5-(methylsulfanyl)-D-ribulose 1-phosphate. It functions in the pathway amino-acid biosynthesis; L-methionine biosynthesis via salvage pathway; L-methionine from S-methyl-5-thio-alpha-D-ribose 1-phosphate: step 1/6. In terms of biological role, catalyzes the interconversion of methylthioribose-1-phosphate (MTR-1-P) into methylthioribulose-1-phosphate (MTRu-1-P). The sequence is that of Methylthioribose-1-phosphate isomerase from Rhodopirellula baltica (strain DSM 10527 / NCIMB 13988 / SH1).